Consider the following 1276-residue polypeptide: Probable outer membrane protein pmp6 (1276 aa).

The first 23 residues, 1–23 (MKYSLPWLLTSSALVFSLHPLMA), serve as a signal peptide directing secretion. Residues 981 to 1276 (DAPSHPGIWI…NANCGTRYSF (296 aa)) enclose the Autotransporter domain.

This sequence belongs to the PMP outer membrane protein family.

The protein localises to the secreted. It localises to the cell wall. The protein resides in the cell outer membrane. This is Probable outer membrane protein pmp6 (pmp6) from Chlamydia pneumoniae (Chlamydophila pneumoniae).